The sequence spans 475 residues: Bifunctional protein HldE (475 aa).

A ribokinase region spans residues 1-317 (MQYSAQFNRA…ENAIHGRTTA (317 aa)). ATP is bound at residue 194–197 (NMSE). Asp263 is an active-site residue. Residues 343 to 475 (MTNGCFDILH…VIKKIQQLKE (133 aa)) form a cytidylyltransferase region.

It in the N-terminal section; belongs to the carbohydrate kinase PfkB family. In the C-terminal section; belongs to the cytidylyltransferase family. As to quaternary structure, homodimer.

It carries out the reaction D-glycero-beta-D-manno-heptose 7-phosphate + ATP = D-glycero-beta-D-manno-heptose 1,7-bisphosphate + ADP + H(+). It catalyses the reaction D-glycero-beta-D-manno-heptose 1-phosphate + ATP + H(+) = ADP-D-glycero-beta-D-manno-heptose + diphosphate. Its pathway is nucleotide-sugar biosynthesis; ADP-L-glycero-beta-D-manno-heptose biosynthesis; ADP-L-glycero-beta-D-manno-heptose from D-glycero-beta-D-manno-heptose 7-phosphate: step 1/4. It functions in the pathway nucleotide-sugar biosynthesis; ADP-L-glycero-beta-D-manno-heptose biosynthesis; ADP-L-glycero-beta-D-manno-heptose from D-glycero-beta-D-manno-heptose 7-phosphate: step 3/4. Catalyzes the phosphorylation of D-glycero-D-manno-heptose 7-phosphate at the C-1 position to selectively form D-glycero-beta-D-manno-heptose-1,7-bisphosphate. Functionally, catalyzes the ADP transfer from ATP to D-glycero-beta-D-manno-heptose 1-phosphate, yielding ADP-D-glycero-beta-D-manno-heptose. The chain is Bifunctional protein HldE from Histophilus somni (strain 129Pt) (Haemophilus somnus).